The chain runs to 588 residues: uncharacterized protein (588 aa).

Positions 1–19 are cleaved as a signal peptide; the sequence is MRSTAYLTALLSFLGATHA. N-linked (GlcNAc...) asparagine glycosylation is found at asparagine 45 and asparagine 104. The FAD-binding PCMH-type domain maps to 118 to 303; that stretch reads GQGRIPLYSA…TSVTLRTFKD (186 aa). Position 156 is a pros-8alpha-FAD histidine (histidine 156). Residues asparagine 179, asparagine 312, asparagine 320, asparagine 351, asparagine 370, and asparagine 446 are each glycosylated (N-linked (GlcNAc...) asparagine).

Belongs to the oxygen-dependent FAD-linked oxidoreductase family. Requires FAD as cofactor.

It is found in the secreted. This is an uncharacterized protein from Arthroderma benhamiae (strain ATCC MYA-4681 / CBS 112371) (Trichophyton mentagrophytes).